A 293-amino-acid chain; its full sequence is Protease HtpX homolog (293 aa).

A run of 2 helical transmembrane segments spans residues 7–26 (ASLL…ALLG) and 30–49 (GMVM…WYYS). Histidine 131 is a Zn(2+) binding site. Glutamate 132 is a catalytic residue. Residue histidine 135 coordinates Zn(2+). Helical transmembrane passes span 148-168 (ATLA…FWFF) and 180-200 (IGAL…QLGI). Glutamate 205 is a binding site for Zn(2+).

It belongs to the peptidase M48B family. Zn(2+) is required as a cofactor.

The protein localises to the cell inner membrane. The polypeptide is Protease HtpX homolog (Acaryochloris marina (strain MBIC 11017)).